Reading from the N-terminus, the 180-residue chain is MSIEVSNESGMDVSEEELISVARFVIARMDVHPAAELSMVLVDSATMADLHMRWMDLPGPTDVMSFPMDELEPGGRPDSPEPGPSMLGDIVLCPSFASDQADKAGHPLAHELALLTVHGVLHLLGYDHAEPEEEKEMFGLQNQLLEDWYEDLRRAERDAALAARDQKLLGKAGFFDSPDQ.

3 residues coordinate Zn(2+): H118, H122, and H128.

It belongs to the endoribonuclease YbeY family. The cofactor is Zn(2+).

The protein localises to the cytoplasm. Its function is as follows. Single strand-specific metallo-endoribonuclease involved in late-stage 70S ribosome quality control and in maturation of the 3' terminus of the 16S rRNA. The chain is Endoribonuclease YbeY from Rhodococcus jostii (strain RHA1).